Here is a 149-residue protein sequence, read N- to C-terminus: Transcriptional regulator MraZ (149 aa).

SpoVT-AbrB domains are found at residues 7 to 54 (KYVN…GISH) and 83 to 126 (AVQL…QPQN).

This sequence belongs to the MraZ family. In terms of assembly, forms oligomers.

Its subcellular location is the cytoplasm. It localises to the nucleoid. This is Transcriptional regulator MraZ from Rickettsia peacockii (strain Rustic).